Reading from the N-terminus, the 225-residue chain is DNA repair protein RecO (225 aa).

It belongs to the RecO family.

Its function is as follows. Involved in DNA repair and RecF pathway recombination. The chain is DNA repair protein RecO from Clostridium perfringens (strain ATCC 13124 / DSM 756 / JCM 1290 / NCIMB 6125 / NCTC 8237 / Type A).